A 445-amino-acid polypeptide reads, in one-letter code: Exodeoxyribonuclease 7 large subunit (445 aa).

The protein belongs to the XseA family. In terms of assembly, heterooligomer composed of large and small subunits.

It localises to the cytoplasm. It carries out the reaction Exonucleolytic cleavage in either 5'- to 3'- or 3'- to 5'-direction to yield nucleoside 5'-phosphates.. In terms of biological role, bidirectionally degrades single-stranded DNA into large acid-insoluble oligonucleotides, which are then degraded further into small acid-soluble oligonucleotides. The protein is Exodeoxyribonuclease 7 large subunit of Staphylococcus aureus (strain bovine RF122 / ET3-1).